A 179-amino-acid polypeptide reads, in one-letter code: MRPSVWAAVAAGLWVLCTVIAAAPRRCLLSHYRSLEPRTLAAAKALRDRYEEEALSWGQRNCSFRPRRDPPRPSSCARLRHVARGIADAQAVLSGLHRSELLPGAGPILELLAAAGRDVAACLELARPGSSRKVPGAQKRRHKPRRADSPRCRKASVVFNLLRLLTWELRLAAHSGPCL.

An N-terminal signal peptide occupies residues 1–21 (MRPSVWAAVAAGLWVLCTVIA). The segment at 130–149 (SSRKVPGAQKRRHKPRRADS) is disordered.

The protein belongs to the lambda interferon family.

The protein localises to the cytoplasm. It is found in the secreted. In terms of biological role, cytokine that may trigger an antiviral response activating the JAK-STAT pathway and up-regulating specifically some interferon-stimulated genes. This is Interferon lambda-4 (IFNL4) from Homo sapiens (Human).